The chain runs to 132 residues: uncharacterized protein (132 aa).

This sequence belongs to the mycobacterial PPE family.

This is an uncharacterized protein from Mycobacterium tuberculosis (strain ATCC 25618 / H37Rv).